The primary structure comprises 283 residues: Bifunctional protein FolD (283 aa).

Residues 165 to 167 (GAS) and serine 190 contribute to the NADP(+) site.

The protein belongs to the tetrahydrofolate dehydrogenase/cyclohydrolase family. As to quaternary structure, homodimer.

It catalyses the reaction (6R)-5,10-methylene-5,6,7,8-tetrahydrofolate + NADP(+) = (6R)-5,10-methenyltetrahydrofolate + NADPH. The catalysed reaction is (6R)-5,10-methenyltetrahydrofolate + H2O = (6R)-10-formyltetrahydrofolate + H(+). It functions in the pathway one-carbon metabolism; tetrahydrofolate interconversion. Catalyzes the oxidation of 5,10-methylenetetrahydrofolate to 5,10-methenyltetrahydrofolate and then the hydrolysis of 5,10-methenyltetrahydrofolate to 10-formyltetrahydrofolate. The protein is Bifunctional protein FolD of Cupriavidus taiwanensis (strain DSM 17343 / BCRC 17206 / CCUG 44338 / CIP 107171 / LMG 19424 / R1) (Ralstonia taiwanensis (strain LMG 19424)).